The following is a 105-amino-acid chain: Large ribosomal subunit protein bL21 (105 aa).

Belongs to the bacterial ribosomal protein bL21 family. In terms of assembly, part of the 50S ribosomal subunit. Contacts protein L20.

Functionally, this protein binds to 23S rRNA in the presence of protein L20. The sequence is that of Large ribosomal subunit protein bL21 from Rhizobium rhizogenes (strain K84 / ATCC BAA-868) (Agrobacterium radiobacter).